The chain runs to 350 residues: Phosphoribosylformylglycinamidine cyclo-ligase (350 aa).

This sequence belongs to the AIR synthase family.

Its subcellular location is the cytoplasm. The enzyme catalyses 2-formamido-N(1)-(5-O-phospho-beta-D-ribosyl)acetamidine + ATP = 5-amino-1-(5-phospho-beta-D-ribosyl)imidazole + ADP + phosphate + H(+). It participates in purine metabolism; IMP biosynthesis via de novo pathway; 5-amino-1-(5-phospho-D-ribosyl)imidazole from N(2)-formyl-N(1)-(5-phospho-D-ribosyl)glycinamide: step 2/2. The sequence is that of Phosphoribosylformylglycinamidine cyclo-ligase from Cupriavidus necator (strain ATCC 17699 / DSM 428 / KCTC 22496 / NCIMB 10442 / H16 / Stanier 337) (Ralstonia eutropha).